Consider the following 69-residue polypeptide: Putative membrane protein insertion efficiency factor (69 aa).

It belongs to the UPF0161 family.

The protein localises to the cell inner membrane. Could be involved in insertion of integral membrane proteins into the membrane. The sequence is that of Putative membrane protein insertion efficiency factor from Chromobacterium violaceum (strain ATCC 12472 / DSM 30191 / JCM 1249 / CCUG 213 / NBRC 12614 / NCIMB 9131 / NCTC 9757 / MK).